The following is a 139-amino-acid chain: Large-conductance mechanosensitive channel (139 aa).

The next 2 helical transmembrane spans lie at 19–39 (VAVIIGAAFGAIVSSMVADVI) and 81–101 (GNFLTLTLNFLIVAFVLFMVV).

Belongs to the MscL family. In terms of assembly, homopentamer.

It is found in the cell inner membrane. Channel that opens in response to stretch forces in the membrane lipid bilayer. May participate in the regulation of osmotic pressure changes within the cell. The chain is Large-conductance mechanosensitive channel from Nitrobacter hamburgensis (strain DSM 10229 / NCIMB 13809 / X14).